A 491-amino-acid chain; its full sequence is MSRAYDLVVLGAGSGGLEAGWNAAVTHKKKVAVVDVQATHGPPALVALGGTCVNVGCVPKKLMVTGAQYMDLIRESGGFGWEMDRESLCPNWKTLIAAKNKVVNSINESYKSMFADTEGLSFHMGFGALQDAHTVVVRKSEDPHSDVLETLDTEYILIATGSWPTRLGVPGDEFCITSNEAFYLEDAPKRMLCVGGGYIAVEFAGIFNGYKPCGGYVDLCYRGDLILRGFDTEVRKSLTKQLGANGIRVRTNLNPTKITKNEDGSNHVHFNDGTEEDYDQVMLAIGVPRSQALQLDKAGVRTGKNGAVQVDAYSKTSVDNIYAIGDVTNRVMLTPVAINEGACVLLETVFGGKPRATDHTKVACAVFSIPPIGTCGMTEEEAAKNYETVAVYASSFTPLMHNISGSKHKEFMIRIITNESNGEVLGVHMLGDSAPEIIQSVGICMKMGAKISDFHSTIGVHPTSAEELCSMRTPAYFYESGKRVEKLSSNL.

35–52 provides a ligand contact to FAD; it reads DVQATHGPPALVALGGTC. A disulfide bond links Cys52 and Cys57. His461 functions as the Proton acceptor in the catalytic mechanism.

It belongs to the class-I pyridine nucleotide-disulfide oxidoreductase family. In terms of assembly, homodimer. FAD serves as cofactor.

It localises to the cytoplasm. The enzyme catalyses trypanothione + NADP(+) = trypanothione disulfide + NADPH + H(+). Its function is as follows. Trypanothione is the parasite analog of glutathione; this enzyme is the equivalent of glutathione reductase. This chain is Trypanothione reductase (TPR), found in Leishmania donovani.